Reading from the N-terminus, the 414-residue chain is Sex comb on midleg-like protein 4 (414 aa).

Phosphoserine is present on residues S55 and S65. The segment covering 257–276 (HRGSLHPSSSLYCKRQNSGD) has biased composition (polar residues). The disordered stretch occupies residues 257–343 (HRGSLHPSSS…DARRPRSRNP (87 aa)). A compositionally biased stretch (low complexity) spans 284 to 304 (AATAGGPRTSPMSSGGPSAPG). Positions 288-354 (GGPRTSPMSS…AWTVEDVVWF (67 aa)) constitute an SAM domain. Over residues 312–332 (PKRNTTSLEGNRCASSPSQDA) the composition is skewed to polar residues.

This sequence belongs to the SCM family.

It is found in the nucleus. In terms of biological role, putative Polycomb group (PcG) protein. PcG proteins act by forming multiprotein complexes, which are required to maintain the transcriptionally repressive state of homeotic genes throughout development. The protein is Sex comb on midleg-like protein 4 (SCML4) of Homo sapiens (Human).